Consider the following 395-residue polypeptide: Tryptophan synthase beta chain (395 aa).

Lys86 bears the N6-(pyridoxal phosphate)lysine mark.

The protein belongs to the TrpB family. In terms of assembly, tetramer of two alpha and two beta chains. Requires pyridoxal 5'-phosphate as cofactor.

The catalysed reaction is (1S,2R)-1-C-(indol-3-yl)glycerol 3-phosphate + L-serine = D-glyceraldehyde 3-phosphate + L-tryptophan + H2O. The protein operates within amino-acid biosynthesis; L-tryptophan biosynthesis; L-tryptophan from chorismate: step 5/5. Its function is as follows. The beta subunit is responsible for the synthesis of L-tryptophan from indole and L-serine. This chain is Tryptophan synthase beta chain, found in Psychromonas ingrahamii (strain DSM 17664 / CCUG 51855 / 37).